A 355-amino-acid polypeptide reads, in one-letter code: Erythronate-4-phosphate dehydrogenase (355 aa).

Ser-45 and Thr-66 together coordinate substrate. Asp-146 is an NAD(+) binding site. Residue Arg-206 is part of the active site. Residue Asp-229 participates in NAD(+) binding. Residue Glu-234 is part of the active site. Residue His-251 is the Proton donor of the active site. Residue Gly-254 coordinates NAD(+). Substrate is bound at residue Tyr-255.

It belongs to the D-isomer specific 2-hydroxyacid dehydrogenase family. PdxB subfamily. As to quaternary structure, homodimer.

The protein resides in the cytoplasm. The catalysed reaction is 4-phospho-D-erythronate + NAD(+) = (R)-3-hydroxy-2-oxo-4-phosphooxybutanoate + NADH + H(+). Its pathway is cofactor biosynthesis; pyridoxine 5'-phosphate biosynthesis; pyridoxine 5'-phosphate from D-erythrose 4-phosphate: step 2/5. Functionally, catalyzes the oxidation of erythronate-4-phosphate to 3-hydroxy-2-oxo-4-phosphonooxybutanoate. The protein is Erythronate-4-phosphate dehydrogenase of Acinetobacter baumannii (strain ACICU).